Reading from the N-terminus, the 342-residue chain is Oxygen-dependent coproporphyrinogen-III oxidase (342 aa).

Serine 98 is a binding site for substrate. Positions 102 and 112 each coordinate a divalent metal cation. The active-site Proton donor is the histidine 112. 114–116 (NYR) provides a ligand contact to substrate. Residues histidine 146 and histidine 176 each coordinate a divalent metal cation. Positions 266-301 (YVEFNLVWDRGTIFGLQTNGRTESILMSLPPLARWE) are important for dimerization.

Belongs to the aerobic coproporphyrinogen-III oxidase family. As to quaternary structure, homodimer. Requires a divalent metal cation as cofactor.

It localises to the cytoplasm. The enzyme catalyses coproporphyrinogen III + O2 + 2 H(+) = protoporphyrinogen IX + 2 CO2 + 2 H2O. Its pathway is porphyrin-containing compound metabolism; protoporphyrin-IX biosynthesis; protoporphyrinogen-IX from coproporphyrinogen-III (O2 route): step 1/1. Functionally, involved in the heme and chlorophyll biosynthesis. Catalyzes the aerobic oxidative decarboxylation of propionate groups of rings A and B of coproporphyrinogen-III to yield the vinyl groups in protoporphyrinogen-IX. This chain is Oxygen-dependent coproporphyrinogen-III oxidase, found in Prochlorococcus marinus (strain MIT 9301).